A 54-amino-acid chain; its full sequence is Rubredoxin-1 (54 aa).

A Rubredoxin-like domain is found at 1-52; the sequence is MKKWECVVCGFIYDEAEGLPDEGIEPGTAWNNVPEDWVCPDCGVGKDDFEMV. The Fe cation site is built by cysteine 6, cysteine 9, cysteine 39, and cysteine 42.

It belongs to the rubredoxin family. Fe(3+) serves as cofactor.

The protein localises to the cytoplasm. The protein operates within hydrocarbon metabolism; alkane degradation. Its function is as follows. Involved in the hydrocarbon hydroxylating system, which transfers electrons from NADH to rubredoxin reductase and then through rubredoxin to alkane 1 monooxygenase. This Alcanivorax borkumensis (strain ATCC 700651 / DSM 11573 / NCIMB 13689 / SK2) protein is Rubredoxin-1 (rubA).